The sequence spans 446 residues: Glutamine synthetase (446 aa).

Positions 15 to 102 constitute a GS beta-grasp domain; sequence RDIRFVRLWF…MFCDITMPDG (88 aa). In terms of domain architecture, GS catalytic spans 109–446; that stretch reads PRHVLRRQLT…PYELRTYLSL (338 aa). Residues Glu-132 and Glu-134 each coordinate Mg(2+). Glu-184 contacts ATP. 2 residues coordinate Mg(2+): Glu-189 and Glu-196. Position 241 (Gly-241) interacts with L-glutamate. His-245 is a Mg(2+) binding site. ATP-binding positions include 247–249 and Ser-249; that span reads HMS. L-glutamate contacts are provided by Arg-298, Glu-304, and Arg-316. Residues Arg-316 and Arg-321 each coordinate ATP. Glu-336 serves as a coordination point for Mg(2+). L-glutamate is bound at residue Arg-338.

It belongs to the glutamine synthetase family. In terms of assembly, oligomer of 12 subunits arranged in the form of two hexagons. In its feedback-inhibited form, interacts with TnrA in order to block its DNA-binding activity. The cofactor is Mg(2+).

Its subcellular location is the cytoplasm. The enzyme catalyses L-glutamate + NH4(+) + ATP = L-glutamine + ADP + phosphate + H(+). Inhibited by glutamine. Functionally, glutamine synthetase (GS) is an unusual multitasking protein that functions as an enzyme, a transcription coregulator, and a chaperone in ammonium assimilation and in the regulation of genes involved in nitrogen metabolism. It catalyzes the ATP-dependent biosynthesis of glutamine from glutamate and ammonia. Feedback-inhibited GlnA also interacts with and regulates the activity of the transcriptional regulator TnrA. During nitrogen limitation, TnrA is in its DNA-binding active state and turns on the transcription of genes required for nitrogen assimilation. Under conditions of nitrogen excess, feedback-inhibited GlnA forms a stable complex with TnrA, which inhibits its DNA-binding activity. In contrast, feedback-inhibited GlnA acts as a chaperone to stabilize the DNA-binding activity of GlnR, which represses the transcription of nitrogen assimilation genes. The chain is Glutamine synthetase from Mycobacterium bovis (strain ATCC BAA-935 / AF2122/97).